We begin with the raw amino-acid sequence, 1007 residues long: uncharacterized protein (1007 aa).

A signal peptide spans 1–51 (MTTPISNSPSSIPTVTVSTTTASSGSLGTSTVSSTTTSTSVAQTATTTSSA). Over residues 1 to 96 (MTTPISNSPS…SATANKTSSA (96 aa)) the composition is skewed to low complexity. Disordered regions lie at residues 1 to 186 (MTTP…GNPI), 200 to 224 (TYTTSPRNENIFSPGPEGLPNMSLP), 387 to 533 (NWGS…GPDI), 543 to 562 (TVYPGENGGSTEGPLPANQN), 578 to 645 (ETII…GPDI), 655 to 674 (TVYPGENGGSTEGPLPANQN), and 712 to 757 (DLED…GPDI). Over residues 118–163 (DGEVSSNYDDVDTPTNSSDSTVDSDYQDVETQYKTISNNGENTYET) the composition is skewed to polar residues. Basic and acidic residues predominate over residues 167-176 (HGEKNTHVQE). Polar residues-rich tracts occupy residues 177–186 (SHASGTGNPI) and 200–210 (TYTTSPRNENI). Positions 423–442 (VINVNVNVGGTNVNIGDTNV) are enriched in low complexity. Polar residues predominate over residues 443–453 (SKGSGTPTSSQ). Positions 469–491 (IDTNNQTNGDINTNDNSNNVDGS) are enriched in low complexity. Residues 507 to 523 (DTESTNGNDSGKTTSTE) are compositionally biased toward polar residues. Residues 597–618 (ADADVEDTSDTDSGIGDDDGVS) show a composition bias toward acidic residues. Low complexity predominate over residues 619–635 (DTESTNGNNSGKTTSTE). Acidic residues predominate over residues 712 to 730 (DLEDVSDADSGFGDDDGIS). A compositionally biased stretch (polar residues) spans 732–743 (TESTNGNDSGKN).

This sequence belongs to the chlamydial CPn_0572/CT_456/TC_0741 family.

This is an uncharacterized protein from Chlamydia muridarum (strain MoPn / Nigg).